The following is a 248-amino-acid chain: Phosphoglycerate mutase (248 aa).

Substrate contacts are provided by residues 8–15 (RHGQSEWN), 21–22 (TG), Arg-60, 87–90 (ERHY), Lys-98, 114–115 (RR), and 183–184 (GN). The active-site Tele-phosphohistidine intermediate is His-9. Residue Glu-87 is the Proton donor/acceptor of the active site.

This sequence belongs to the phosphoglycerate mutase family. BPG-dependent PGAM subfamily.

The protein localises to the cytoplasm. It carries out the reaction (2R)-2-phosphoglycerate = (2R)-3-phosphoglycerate. Its pathway is carbohydrate degradation; glycolysis; pyruvate from D-glyceraldehyde 3-phosphate: step 3/5. The chain is Phosphoglycerate mutase (GPM1) from Candida albicans (strain SC5314 / ATCC MYA-2876) (Yeast).